The following is a 227-amino-acid chain: Protein SSO0193 (227 aa).

The AMMECR1 domain maps to 15–209 (EIGRLLIEIA…ETKPNGSDII (195 aa)).

The polypeptide is Protein SSO0193 (Saccharolobus solfataricus (strain ATCC 35092 / DSM 1617 / JCM 11322 / P2) (Sulfolobus solfataricus)).